A 332-amino-acid chain; its full sequence is Nicotianamine synthase 1 (332 aa).

Belongs to the nicotianamine synthase (NAS)-like family. As to expression, expressed in roots.

The catalysed reaction is 3 S-adenosyl-L-methionine = nicotianamine + 3 S-methyl-5'-thioadenosine + 3 H(+). Its function is as follows. Synthesizes nicotianamine, a polyamine that is the first intermediate in the synthesis of the phytosiderophores of the mugineic acid type found in gramineae which serve as a sensor for the physiological iron status within the plant, and/or might be involved in the transport of iron. The polypeptide is Nicotianamine synthase 1 (NAS1) (Oryza sativa subsp. indica (Rice)).